Consider the following 166-residue polypeptide: NAD(P)H-quinone oxidoreductase subunit I, chloroplastic (166 aa).

4Fe-4S ferredoxin-type domains follow at residues 55–84 (GRIH…VDWK) and 95–124 (LNYS…MTEE). Residues cysteine 64, cysteine 67, cysteine 70, cysteine 74, cysteine 104, cysteine 107, cysteine 110, and cysteine 114 each contribute to the [4Fe-4S] cluster site.

It belongs to the complex I 23 kDa subunit family. In terms of assembly, NDH is composed of at least 16 different subunits, 5 of which are encoded in the nucleus. The cofactor is [4Fe-4S] cluster.

The protein localises to the plastid. It localises to the chloroplast thylakoid membrane. The enzyme catalyses a plastoquinone + NADH + (n+1) H(+)(in) = a plastoquinol + NAD(+) + n H(+)(out). The catalysed reaction is a plastoquinone + NADPH + (n+1) H(+)(in) = a plastoquinol + NADP(+) + n H(+)(out). Its function is as follows. NDH shuttles electrons from NAD(P)H:plastoquinone, via FMN and iron-sulfur (Fe-S) centers, to quinones in the photosynthetic chain and possibly in a chloroplast respiratory chain. The immediate electron acceptor for the enzyme in this species is believed to be plastoquinone. Couples the redox reaction to proton translocation, and thus conserves the redox energy in a proton gradient. This chain is NAD(P)H-quinone oxidoreductase subunit I, chloroplastic, found in Pericome caudata (Mountain tail-leaf).